The primary structure comprises 615 residues: 1-deoxy-D-xylulose-5-phosphate synthase (615 aa).

Thiamine diphosphate is bound by residues His72 and 113 to 115; that span reads GHA. Mg(2+) is bound at residue Asp144. Thiamine diphosphate is bound by residues 145-146, Asn173, Tyr281, and Glu360; that span reads GA. Residue Asn173 participates in Mg(2+) binding.

Belongs to the transketolase family. DXPS subfamily. As to quaternary structure, homodimer. It depends on Mg(2+) as a cofactor. Thiamine diphosphate is required as a cofactor.

It carries out the reaction D-glyceraldehyde 3-phosphate + pyruvate + H(+) = 1-deoxy-D-xylulose 5-phosphate + CO2. It participates in metabolic intermediate biosynthesis; 1-deoxy-D-xylulose 5-phosphate biosynthesis; 1-deoxy-D-xylulose 5-phosphate from D-glyceraldehyde 3-phosphate and pyruvate: step 1/1. Its function is as follows. Catalyzes the acyloin condensation reaction between C atoms 2 and 3 of pyruvate and glyceraldehyde 3-phosphate to yield 1-deoxy-D-xylulose-5-phosphate (DXP). This chain is 1-deoxy-D-xylulose-5-phosphate synthase, found in Thermus thermophilus (strain ATCC BAA-163 / DSM 7039 / HB27).